The sequence spans 462 residues: MNVMRLSKDSVAVGLSWLLTGLILLLVCLFSALIVRDYGRENEAARQTIQEKGSVLIRALESGTRVGMGMRMHHSQLQTLLEEMAWQPGVLWFAVTDENGKIIAHSDPRRVGESLYPASTLRELNIGSEERWRRLEQPEPALEIYRQFRPLNGGGHHMRMMMRRESADLRNQAPQVIFIAFDTRELDADHARGLRNMVIMLCAAGVVMAATVLAQFWFRRYQRSRKQLQEATARKEKLVALGHLAAGVAHEIRNPLSSIKGLAKYFAERTPADGEAHQLALVMAREADRLNRVVSELLELVRPAHLKYQSVDLNEVITHSLQLVSQDAASRAISLTFTAQPALCRIQADPDRLKQVLLNLYLNAVHAIGREGVITVAVRECGDGRVKVSVADSGKGMTAEQLQAIFTPYFSTKADGTGLGLAVVQNIVEQHGGTIDAESAPGKGALFTFYLPVNGQQKDEQG.

The Cytoplasmic segment spans residues 1–14; it reads MNVMRLSKDSVAVG. Residues 15–35 traverse the membrane as a helical segment; that stretch reads LSWLLTGLILLLVCLFSALIV. The Periplasmic portion of the chain corresponds to 36 to 197; it reads RDYGRENEAA…ADHARGLRNM (162 aa). Residues 198 to 218 traverse the membrane as a helical segment; it reads VIMLCAAGVVMAATVLAQFWF. At 219-462 the chain is on the cytoplasmic side; it reads RRYQRSRKQL…VNGQQKDEQG (244 aa). A Histidine kinase domain is found at 247 to 455; sequence GVAHEIRNPL…LFTFYLPVNG (209 aa). Phosphohistidine; by autocatalysis is present on histidine 250.

Post-translationally, autophosphorylated.

Its subcellular location is the cell inner membrane. The enzyme catalyses ATP + protein L-histidine = ADP + protein N-phospho-L-histidine.. With respect to regulation, activity of the ZraS/ZraR two-component system is repressed by the zinc-bound form of ZraP, which probably interacts with the periplasmic region of ZraS. Its function is as follows. Part of the Zra signaling pathway, an envelope stress response (ESR) system composed of the periplasmic accessory protein ZraP, the histidine kinase ZraS and the transcriptional regulator ZraR. The ZraPSR system contributes to antibiotic resistance and is important for membrane integrity in the presence of membrane-targeting biocides. ZraS is a member of the two-component regulatory system ZraS/ZraR. Functions as a membrane-associated sensor kinase that phosphorylates ZraR in response to high concentrations of Zn(2+) or Pb(2+) in the medium. The sequence is that of Sensor histidine kinase ZraS (zraS) from Klebsiella oxytoca.